A 222-amino-acid polypeptide reads, in one-letter code: MEPHDQSGSTTRQLDEIRDRRGSQIRSVRLLPWRPFTRFPVCPSGTSPYSRGTHSQPSYVRCQNCERARQWFRAHDGPRCLHQRPDYSRLQAPPDPFQHLNSFEPILLAALSVLRPLPRDIQITIISCACDYFHSVRCASSRYLGSSRSAVKRRAARLNYCYKCGHPLYLNKPHTCRPGRLCSASISERLALLREGPIRSLTENPINARAAHFLAHELLDPR.

The span at 1–12 (MEPHDQSGSTTR) shows a compositional bias: polar residues. The interval 1–21 (MEPHDQSGSTTRQLDEIRDRR) is disordered.

Functionally, may act as a regulatory factor during viral transcription. This Indian citrus ringspot virus (isolate Kinnow mandarin/India/K1/1996) (ICRSV) protein is 23kDa protein.